A 188-amino-acid polypeptide reads, in one-letter code: dCTP deaminase (188 aa).

DCTP-binding positions include 111–116 (KSTYAR), 135–137 (TLE), Q156, Y170, and Q180. E137 (proton donor/acceptor) is an active-site residue.

Belongs to the dCTP deaminase family. As to quaternary structure, homotrimer.

The enzyme catalyses dCTP + H2O + H(+) = dUTP + NH4(+). Its pathway is pyrimidine metabolism; dUMP biosynthesis; dUMP from dCTP (dUTP route): step 1/2. Catalyzes the deamination of dCTP to dUTP. This is dCTP deaminase from Cupriavidus taiwanensis (strain DSM 17343 / BCRC 17206 / CCUG 44338 / CIP 107171 / LMG 19424 / R1) (Ralstonia taiwanensis (strain LMG 19424)).